The primary structure comprises 469 residues: UDP-N-acetylmuramate--L-alanine ligase (469 aa).

An ATP-binding site is contributed by glycine 123 to threonine 129.

This sequence belongs to the MurCDEF family.

The protein resides in the cytoplasm. It catalyses the reaction UDP-N-acetyl-alpha-D-muramate + L-alanine + ATP = UDP-N-acetyl-alpha-D-muramoyl-L-alanine + ADP + phosphate + H(+). Its pathway is cell wall biogenesis; peptidoglycan biosynthesis. In terms of biological role, cell wall formation. This is UDP-N-acetylmuramate--L-alanine ligase from Synechococcus sp. (strain CC9605).